A 411-amino-acid polypeptide reads, in one-letter code: Protein translocase subunit SecY (411 aa).

10 helical membrane-spanning segments follow: residues phenylalanine 13–aspartate 33, isoleucine 52–isoleucine 72, alanine 111–phenylalanine 131, phenylalanine 135–leucine 155, glycine 163–leucine 180, serine 197–valine 217, glycine 252–leucine 272, leucine 291–valine 311, phenylalanine 350–alanine 370, and glycine 377–isoleucine 397.

The protein belongs to the SecY/SEC61-alpha family. As to quaternary structure, component of the plastid Sec protein translocase complex, which is composed of at least SecY, SecE and SecG.

The protein localises to the plastid. It localises to the chloroplast thylakoid membrane. The central subunit of the protein translocation channel SecYE. Consists of two halves formed by TMs 1-5 and 6-10. These two domains form a lateral gate at the front which open onto the bilayer between TMs 2 and 7, and are clamped together by SecE at the back. The channel is closed by both a pore ring composed of hydrophobic SecY resides and a short helix (helix 2A) on the extracellular side of the membrane which forms a plug. This Porphyra purpurea (Red seaweed) protein is Protein translocase subunit SecY.